The chain runs to 208 residues: MARYTGPVCRLCRREGAKLYLKGERCYTGKCAVDRRTYAPGQHGQGRKKISEYGLQLREKQKARRVYGILEGQFRAYFAEADRQQGVTGENLLRLLETRLDNVVFRLGFARSRNEARQFVLHNHFTLNGKKVNIPSIQLRVGDVIQLKEKSKDTPLFKEIVDGLGQKTPPAWLELDVNTLSGRVIALPKREDIDTNLQEHLIVELYSR.

The 66-residue stretch at 98-163 folds into the S4 RNA-binding domain; sequence TRLDNVVFRL…TPLFKEIVDG (66 aa).

This sequence belongs to the universal ribosomal protein uS4 family. As to quaternary structure, part of the 30S ribosomal subunit. Contacts protein S5. The interaction surface between S4 and S5 is involved in control of translational fidelity.

Its function is as follows. One of the primary rRNA binding proteins, it binds directly to 16S rRNA where it nucleates assembly of the body of the 30S subunit. With S5 and S12 plays an important role in translational accuracy. The polypeptide is Small ribosomal subunit protein uS4 (Heliobacterium modesticaldum (strain ATCC 51547 / Ice1)).